The primary structure comprises 253 residues: MGEFNEKKTTCGTVCLKYLLFTYNCCFWLAGLAVMAVGIWTLALKSDYISLLASGTYLATAYILVVAGAVVMVTGVLGCCATFKERRNLLRLYFILLLIIFLLEIIAGVLAYVYYQQLNTELKENLKDTMAKRYHQPGHEAVTSAVDQLQQEFHCCGSNNSQDWRDSEWIRLREARGRVVPDSCCKTVVAGCGQRDHAFNIYKVEGGFITKLETFIQEHLRVIGAVGTGIACVQVFGMIFTCCLYRSLKLEHY.

Residues 1-18 are Cytoplasmic-facing; sequence MGEFNEKKTTCGTVCLKY. S-palmitoyl cysteine attachment occurs at residues Cys11 and Cys15. A helical transmembrane segment spans residues 19–39; the sequence is LLFTYNCCFWLAGLAVMAVGI. Topologically, residues 40–57 are extracellular; that stretch reads WTLALKSDYISLLASGTY. Residues 58-78 form a helical membrane-spanning segment; sequence LATAYILVVAGAVVMVTGVLG. At 79-91 the chain is on the cytoplasmic side; it reads CCATFKERRNLLR. The chain crosses the membrane as a helical span at residues 92–112; that stretch reads LYFILLLIIFLLEIIAGVLAY. Topologically, residues 113-221 are extracellular; it reads VYYQQLNTEL…LETFIQEHLR (109 aa). Asn159 carries an N-linked (GlcNAc...) asparagine glycan. Residues 222–242 traverse the membrane as a helical segment; it reads VIGAVGTGIACVQVFGMIFTC. 2 S-palmitoyl cysteine lipidation sites follow: Cys242 and Cys243. At 243–253 the chain is on the cytoplasmic side; it reads CLYRSLKLEHY.

This sequence belongs to the tetraspanin (TM4SF) family. In terms of assembly, interacts with integrins ITGA3:ITGB1, ITGA5:ITGB1, ITGA3:ITGB1 and ITGA6:ITGB4 and with CD9 and CD181. Interacts (via the second extracellular domain) with integrin ITGAV:ITGB3. Interacts with ITGA3; this interaction modulates ITGA3 glycosylation pattern. Interacts with F11R. Interacts with RAC1 and CDC42; these interactions mediate physical association of RAC1 and CDC42 with integrin adhesion receptor complexes. In terms of processing, palmitoylated. Palmitoylation by ZDHHC2 regulates CD151 expression, association with other tetraspanin family proteins and function in cell adhesion. Ubiquitinated by RNF128 on lysine residues present in the tetraspanin amino terminus via 'Lys-48'-linked ubiquitin leading to proteasomal degradation.

The protein localises to the cell membrane. Structural component of specialized membrane microdomains known as tetraspanin-enriched microdomains (TERMs), which act as platforms for receptor clustering and signaling. Plays a role in various cellular and molecular mechanism through its association with both integrin and non-integrin proteins. These interactions facilitate critical cellular functions, including cell-to-cell communication, wound healing, platelet aggregation, trafficking, cell motility, and angiogenesis. Via interaction with JAM-A/F11R and integrin ITGA3:ITGB1, promotes the recruitment of signaling molecules such as RAC1, CDC42 and RhoGTPases to facilitate the polarization of epithelial cells and the reorganization of the actin cytoskeleton, which are critical steps in cell migration process. Regulates the glycosylation pattern of ITGA3:ITGB1 thereby modulating its activity. Plays an essential role in the maintenance of central laminin-binding integrin ITGA6:ITGB4-containing adhesion complexes. Essential for the proper assembly of the glomerular and tubular basement membranes in kidney. Contributes to T-cell activation by modulating integrin signaling leading to activation of downstream targets PTK2 and MAPK1/MAPK3. The sequence is that of CD151 antigen (CD151) from Chlorocebus aethiops (Green monkey).